The following is a 149-amino-acid chain: Protein FAM72A (149 aa).

Belongs to the FAM72 family. As to quaternary structure, interacts with UNG. Expressed at high levels in stomach and also in kidney and, at low levels, in heart (at protein level). In the stomach, highly expressed in foveolar cells, parietal cells and chief cells (at protein level). In kidney, expressed in endothelial cells, mesangial and epithelial cells (parietal and visceral epithelium) around glomerulus (at protein level).

The protein resides in the cytoplasm. Its subcellular location is the mitochondrion. May play a role in the regulation of cellular reactive oxygen species metabolism. May participate in cell growth regulation. This chain is Protein FAM72A (FAM72A), found in Bos taurus (Bovine).